A 481-amino-acid polypeptide reads, in one-letter code: Cysteine--tRNA ligase (481 aa).

Position 29 (cysteine 29) interacts with Zn(2+). The short motif at 31–41 (VTVYDHCHIGH) is the 'HIGH' region element. Residues cysteine 209, histidine 234, and glutamate 238 each contribute to the Zn(2+) site. The 'KMSKS' region motif lies at 266-270 (KMSKS). Lysine 269 is a binding site for ATP.

It belongs to the class-I aminoacyl-tRNA synthetase family. As to quaternary structure, monomer. Zn(2+) is required as a cofactor.

It is found in the cytoplasm. The catalysed reaction is tRNA(Cys) + L-cysteine + ATP = L-cysteinyl-tRNA(Cys) + AMP + diphosphate. The polypeptide is Cysteine--tRNA ligase (Geobacter sulfurreducens (strain ATCC 51573 / DSM 12127 / PCA)).